A 421-amino-acid chain; its full sequence is Vasopressin V1b receptor (421 aa).

The Extracellular portion of the chain corresponds to Met1 to Lys35. A glycan (N-linked (GlcNAc...) asparagine) is linked at Asn21. A helical membrane pass occupies residues Val36 to Leu59. Residues Gly60–Leu71 lie on the Cytoplasmic side of the membrane. Residues Phe72–Leu93 form a helical membrane-spanning segment. Residues Trp94–Arg108 are Extracellular-facing. The cysteines at positions 107 and 186 are disulfide-linked. Residues Ala109–Leu130 traverse the membrane as a helical segment. The Cytoplasmic segment spans residues Asp131–Tyr151. Residues Pro152–Ser173 traverse the membrane as a helical segment. Residues Leu174–Trp202 are Extracellular-facing. The helical transmembrane segment at Thr203–Cys223 threads the bilayer. Topologically, residues His224–Thr280 are cytoplasmic. Residues Phe281–Trp300 form a helical membrane-spanning segment. The Extracellular portion of the chain corresponds to Ser301 to Thr318. The helical transmembrane segment at Ile319 to Phe338 threads the bilayer. Topologically, residues Asn339 to Ser421 are cytoplasmic. A disordered region spans residues Lys399–Ser421.

It belongs to the G-protein coupled receptor 1 family. Vasopressin/oxytocin receptor subfamily.

The protein localises to the cell membrane. In terms of biological role, receptor for arginine vasopressin. The activity of this receptor is mediated by G proteins which activate a phosphatidyl-inositol-calcium second messenger system. The sequence is that of Vasopressin V1b receptor (Avpr1b) from Mus musculus (Mouse).